Consider the following 583-residue polypeptide: Putative fatty-acid--CoA ligase fadD25 (583 aa).

The next 3 membrane-spanning stretches (helical) occupy residues Tyr-77 to Pro-97, Val-109 to Val-129, and Phe-229 to Ile-249. The tract at residues Ile-353–Thr-375 is disordered.

This sequence belongs to the ATP-dependent AMP-binding enzyme family.

The protein localises to the cell membrane. The chain is Putative fatty-acid--CoA ligase fadD25 (fadD25) from Mycobacterium tuberculosis (strain CDC 1551 / Oshkosh).